The sequence spans 378 residues: Dihydroorotate dehydrogenase (quinone) (378 aa).

Residues 77–81 and threonine 101 each bind FMN; that span reads AGFDK. Lysine 81 is a substrate binding site. 126-130 lines the substrate pocket; it reads NRMGF. Positions 158 and 191 each coordinate FMN. Asparagine 191 lines the substrate pocket. Serine 194 functions as the Nucleophile in the catalytic mechanism. Asparagine 196 lines the substrate pocket. FMN contacts are provided by lysine 229 and threonine 257. 258-259 is a substrate binding site; that stretch reads NT. Residues glycine 287, glycine 316, and 337-338 each bind FMN; that span reads YT.

The protein belongs to the dihydroorotate dehydrogenase family. Type 2 subfamily. In terms of assembly, monomer. The cofactor is FMN.

It localises to the cell membrane. It catalyses the reaction (S)-dihydroorotate + a quinone = orotate + a quinol. Its pathway is pyrimidine metabolism; UMP biosynthesis via de novo pathway; orotate from (S)-dihydroorotate (quinone route): step 1/1. Catalyzes the conversion of dihydroorotate to orotate with quinone as electron acceptor. This Synechococcus elongatus (strain ATCC 33912 / PCC 7942 / FACHB-805) (Anacystis nidulans R2) protein is Dihydroorotate dehydrogenase (quinone).